The primary structure comprises 651 residues: Endoplasmic reticulum chaperone BiP (651 aa).

Positions 1 to 20 are cleaved as a signal peptide; that stretch reads MGLSTYVGIFLLCILTLSRC. ATP-binding positions include 36–39, Lys-96, 226–228, 292–299, and 363–366; these read GTTY, GGT, EKAKRTLS, and GSTR. Residues 125-279 are nucleotide-binding (NBD); it reads KPYMKVQVGS…KKKEGKDITK (155 aa). The tract at residues 399 to 499 is substrate-binding (SBD); sequence VQAGVISGVE…PRGLPQIEVT (101 aa). Positions 648–651 match the Prevents secretion from ER motif; sequence KEEL.

Belongs to the heat shock protein 70 family.

It is found in the endoplasmic reticulum lumen. It carries out the reaction ATP + H2O = ADP + phosphate + H(+). With respect to regulation, the chaperone activity is regulated by ATP-induced allosteric coupling of the nucleotide-binding (NBD) and substrate-binding (SBD) domains. In the ADP-bound and nucleotide-free (apo) states, the two domains have little interaction. In contrast, in the ATP-bound state the two domains are tightly coupled, which results in drastically accelerated kinetics in both binding and release of polypeptide substrates. J domain-containing co-chaperones stimulate the ATPase activity and are required for efficient substrate recognition. Functionally, endoplasmic reticulum chaperone that plays a key role in protein folding and quality control in the endoplasmic reticulum lumen. Involved in the correct folding of proteins and degradation of misfolded proteins. Acts as a key repressor of the unfolded protein response (UPR). The protein is Endoplasmic reticulum chaperone BiP of Echinococcus granulosus (Hydatid tapeworm).